A 218-amino-acid chain; its full sequence is Protein-methionine-sulfoxide reductase heme-binding subunit MsrQ (218 aa).

5 helical membrane-spanning segments follow: residues 12 to 32 (TLIK…LALF), 82 to 102 (MLGL…LWFD), 118 to 138 (PFIT…ITST), 150 to 170 (WQWL…HYWW), and 180 to 200 (QPII…FWAW).

This sequence belongs to the MsrQ family. In terms of assembly, heterodimer of a catalytic subunit (MsrP) and a heme-binding subunit (MsrQ). Requires FMN as cofactor. It depends on heme b as a cofactor.

It localises to the cell inner membrane. In terms of biological role, part of the MsrPQ system that repairs oxidized periplasmic proteins containing methionine sulfoxide residues (Met-O), using respiratory chain electrons. Thus protects these proteins from oxidative-stress damage caused by reactive species of oxygen and chlorine generated by the host defense mechanisms. MsrPQ is essential for the maintenance of envelope integrity under bleach stress, rescuing a wide series of structurally unrelated periplasmic proteins from methionine oxidation. MsrQ provides electrons for reduction to the reductase catalytic subunit MsrP, using the quinone pool of the respiratory chain. The protein is Protein-methionine-sulfoxide reductase heme-binding subunit MsrQ of Herminiimonas arsenicoxydans.